A 451-amino-acid polypeptide reads, in one-letter code: Acetylornithine aminotransferase, mitochondrial (451 aa).

Residue Lys-302 is modified to N6-(pyridoxal phosphate)lysine.

It belongs to the class-III pyridoxal-phosphate-dependent aminotransferase family. Requires pyridoxal 5'-phosphate as cofactor. Found at highest levels in nodules, confined to the infected cells.

Its subcellular location is the mitochondrion. The catalysed reaction is N(2)-acetyl-L-ornithine + 2-oxoglutarate = N-acetyl-L-glutamate 5-semialdehyde + L-glutamate. Its pathway is amino-acid biosynthesis; L-arginine biosynthesis; N(2)-acetyl-L-ornithine from L-glutamate: step 4/4. In terms of biological role, involved in the biosynthesis of citrulline. In Alnus glutinosa (European alder), this protein is Acetylornithine aminotransferase, mitochondrial (AG118).